The sequence spans 1091 residues: Voltage-dependent calcium channel subunit alpha-2/delta-3 (1091 aa).

The first 28 residues, 1 to 28 (MAGPGSPRRASRGASALLAAALLYAALG), serve as a signal peptide directing secretion. Topologically, residues 29–1068 (DVVRSEQQIP…HPEENARECG (1040 aa)) are extracellular. N-linked (GlcNAc...) asparagine glycosylation occurs at N166. The 183-residue stretch at 256 to 438 (DVVILVDVSG…ENVMEYLHVL (183 aa)) folds into the VWFA domain. The a divalent metal cation site is built by D262, S264, and S266. The short motif at 262 to 266 (DVSGS) is the MIDAS-like motif element. The N-linked (GlcNAc...) asparagine glycan is linked to N309. C412 and C1055 form a disulfide bridge. The 98-residue stretch at 452 to 549 (WTEAYIDSTL…RLLYEEGKKR (98 aa)) folds into the Cache domain. 3 N-linked (GlcNAc...) asparagine glycosylation sites follow: N553, N632, and N793. Y924 bears the Phosphotyrosine mark. The chain crosses the membrane as a helical span at residues 1069 to 1089 (GAPSLQAQTVLLLLPLLLMLF). The Cytoplasmic portion of the chain corresponds to 1090–1091 (SR).

The protein belongs to the calcium channel subunit alpha-2/delta family. Dimer formed of alpha-2-2 and delta-2 chains; disulfide-linked. Voltage-dependent calcium channels are multisubunit complexes, consisting of alpha-1 (CACNA1), alpha-2 (CACNA2D), beta (CACNB) and delta (CACNA2D) subunits in a 1:1:1:1 ratio. N-glycosylated. Post-translationally, may be proteolytically processed into subunits alpha-2-3 and delta-3 that are disulfide-linked. It is however unclear whether such cleavage really takes place in vivo and has a functional role. As to expression, only detected in brain. Not present in lung, testis, aorta, spleen, jejunum, ventricular muscle and kidney (at protein level). According to PubMed:11687876, it is brain-specific, while according to PubMed:11245980, it is widely expressed.

Its subcellular location is the membrane. Its function is as follows. The alpha-2/delta subunit of voltage-dependent calcium channels regulates calcium current density and activation/inactivation kinetics of the calcium channel. Acts as a regulatory subunit for P/Q-type calcium channel (CACNA1A), N-type (CACNA1B), L-type (CACNA1C OR CACNA1D) but not T-type (CACNA1G). This is Voltage-dependent calcium channel subunit alpha-2/delta-3 (CACNA2D3) from Homo sapiens (Human).